The primary structure comprises 492 residues: Propanoyl-CoA:succinate CoA transferase (492 aa).

260–264 serves as a coordination point for CoA; it reads GVGNI. Catalysis depends on glutamate 286, which acts as the 5-glutamyl coenzyme A thioester intermediate. Residues asparagine 376 and glycine 380 each contribute to the CoA site.

This sequence belongs to the acetyl-CoA hydrolase/transferase family.

The catalysed reaction is propanoyl-CoA + succinate = propanoate + succinyl-CoA. Catalyzes the transfer of coenzyme A from propionyl-CoA to succinate. Could be part of a pathway that converts succinate to propionate. This Escherichia coli (strain K12) protein is Propanoyl-CoA:succinate CoA transferase.